Here is a 289-residue protein sequence, read N- to C-terminus: 4-diphosphocytidyl-2-C-methyl-D-erythritol kinase (289 aa).

Lys10 is an active-site residue. 94–104 lines the ATP pocket; that stretch reads PVAAGLAGGSS. The active site involves Asp136.

The protein belongs to the GHMP kinase family. IspE subfamily.

It catalyses the reaction 4-CDP-2-C-methyl-D-erythritol + ATP = 4-CDP-2-C-methyl-D-erythritol 2-phosphate + ADP + H(+). Its pathway is isoprenoid biosynthesis; isopentenyl diphosphate biosynthesis via DXP pathway; isopentenyl diphosphate from 1-deoxy-D-xylulose 5-phosphate: step 3/6. Functionally, catalyzes the phosphorylation of the position 2 hydroxy group of 4-diphosphocytidyl-2C-methyl-D-erythritol. The protein is 4-diphosphocytidyl-2-C-methyl-D-erythritol kinase of Bacillus cereus (strain G9842).